The primary structure comprises 332 residues: Nucleoid-associated protein VIBHAR_03026 (332 aa).

The protein belongs to the YejK family.

It is found in the cytoplasm. It localises to the nucleoid. The chain is Nucleoid-associated protein VIBHAR_03026 from Vibrio campbellii (strain ATCC BAA-1116).